The sequence spans 514 residues: Cobyric acid synthase (514 aa).

In terms of domain architecture, GATase cobBQ-type spans 258–458; it reads ALMVGVVRLP…IHGIFDNDGL (201 aa). The active-site Nucleophile is cysteine 339. Histidine 450 is an active-site residue.

The protein belongs to the CobB/CobQ family. CobQ subfamily.

Its pathway is cofactor biosynthesis; adenosylcobalamin biosynthesis. Its function is as follows. Catalyzes amidations at positions B, D, E, and G on adenosylcobyrinic A,C-diamide. NH(2) groups are provided by glutamine, and one molecule of ATP is hydrogenolyzed for each amidation. This Syntrophobacter fumaroxidans (strain DSM 10017 / MPOB) protein is Cobyric acid synthase.